The following is a 474-amino-acid chain: uncharacterized protein (474 aa).

Residues Met1–Leu14 show a composition bias toward polar residues. The interval Met1 to Ser137 is disordered. Residue Ser45 is modified to Phosphoserine. Polar residues-rich tracts occupy residues Arg73–Ser83, Ser97–Pro113, and Ser125–Ser137. Ser169 bears the Phosphoserine mark. The next 2 helical transmembrane spans lie at Val210–Gly230 and Ile236–Ile256.

It localises to the membrane. This is an uncharacterized protein from Arabidopsis thaliana (Mouse-ear cress).